The primary structure comprises 246 residues: Bis(5'-nucleosyl)-tetraphosphatase PrpE [asymmetrical] (246 aa).

The protein belongs to the PrpE family. Requires Ni(2+) as cofactor.

It carries out the reaction P(1),P(4)-bis(5'-guanosyl) tetraphosphate + H2O = GMP + GTP + 2 H(+). Asymmetrically hydrolyzes Ap4p to yield AMP and ATP. The protein is Bis(5'-nucleosyl)-tetraphosphatase PrpE [asymmetrical] of Bacillus cereus (strain 03BB102).